The following is a 218-amino-acid chain: Kynurenine formamidase (218 aa).

Substrate is bound at residue Trp27. Residues His57, His61, and Asp63 each contribute to the Zn(2+) site. His67 acts as the Proton donor/acceptor in catalysis. 2 residues coordinate Zn(2+): His169 and Glu181.

This sequence belongs to the Cyclase 1 superfamily. KynB family. Homodimer. The cofactor is Zn(2+).

It carries out the reaction N-formyl-L-kynurenine + H2O = L-kynurenine + formate + H(+). Its pathway is amino-acid degradation; L-tryptophan degradation via kynurenine pathway; L-kynurenine from L-tryptophan: step 2/2. Its activity is regulated as follows. Inhibited by EDTA. Insensitive to phenylmethylsulfonyl fluoride (PMSF). Functionally, catalyzes the hydrolysis of N-formyl-L-kynurenine to L-kynurenine, the second step in the kynurenine pathway of tryptophan degradation. This is Kynurenine formamidase from Cupriavidus metallidurans (strain ATCC 43123 / DSM 2839 / NBRC 102507 / CH34) (Ralstonia metallidurans).